Here is a 247-residue protein sequence, read N- to C-terminus: ABC-type transporter ATP-binding protein EcsA (247 aa).

The ABC transporter domain maps to 4 to 234; sequence LSVKDLTGGY…FGMKDAALDD (231 aa). 36-43 is an ATP binding site; it reads GLNGAGKS.

It belongs to the ABC transporter superfamily.

In terms of biological role, has a role in exoprotein production, sporulation and competence. In Bacillus subtilis (strain 168), this protein is ABC-type transporter ATP-binding protein EcsA (ecsA).